The following is a 214-amino-acid chain: Probable transaldolase (214 aa).

The active-site Schiff-base intermediate with substrate is Lys83.

It belongs to the transaldolase family. Type 3B subfamily.

The protein resides in the cytoplasm. The catalysed reaction is D-sedoheptulose 7-phosphate + D-glyceraldehyde 3-phosphate = D-erythrose 4-phosphate + beta-D-fructose 6-phosphate. The protein operates within carbohydrate degradation; pentose phosphate pathway; D-glyceraldehyde 3-phosphate and beta-D-fructose 6-phosphate from D-ribose 5-phosphate and D-xylulose 5-phosphate (non-oxidative stage): step 2/3. Its function is as follows. Transaldolase is important for the balance of metabolites in the pentose-phosphate pathway. This chain is Probable transaldolase, found in Clostridium tetani (strain Massachusetts / E88).